We begin with the raw amino-acid sequence, 65 residues long: Small ribosomal subunit protein eS27 (65 aa).

Positions 20, 23, 39, and 42 each coordinate Zn(2+). The C4-type zinc-finger motif lies at 20 to 42 (CIDCGNEQIVFSHPATRVRCNVC).

It belongs to the eukaryotic ribosomal protein eS27 family. In terms of assembly, part of the 30S ribosomal subunit. Zn(2+) serves as cofactor.

The sequence is that of Small ribosomal subunit protein eS27 from Pyrococcus abyssi (strain GE5 / Orsay).